The primary structure comprises 425 residues: Dual-specificity RNA methyltransferase RlmN (425 aa).

Residue glutamate 136 is the Proton acceptor of the active site. One can recognise a Radical SAM core domain in the interval 142 to 389 (GDDRGTLCVS…VRTPRGRDIL (248 aa)). The cysteines at positions 149 and 392 are disulfide-linked. [4Fe-4S] cluster is bound by residues cysteine 156, cysteine 160, and cysteine 163. Residues 218–219 (GE), serine 250, 272–274 (SLH), and asparagine 349 each bind S-adenosyl-L-methionine. The S-methylcysteine intermediate role is filled by cysteine 392.

Belongs to the radical SAM superfamily. RlmN family. The cofactor is [4Fe-4S] cluster.

The protein localises to the cytoplasm. The enzyme catalyses adenosine(2503) in 23S rRNA + 2 reduced [2Fe-2S]-[ferredoxin] + 2 S-adenosyl-L-methionine = 2-methyladenosine(2503) in 23S rRNA + 5'-deoxyadenosine + L-methionine + 2 oxidized [2Fe-2S]-[ferredoxin] + S-adenosyl-L-homocysteine. The catalysed reaction is adenosine(37) in tRNA + 2 reduced [2Fe-2S]-[ferredoxin] + 2 S-adenosyl-L-methionine = 2-methyladenosine(37) in tRNA + 5'-deoxyadenosine + L-methionine + 2 oxidized [2Fe-2S]-[ferredoxin] + S-adenosyl-L-homocysteine. Its function is as follows. Specifically methylates position 2 of adenine 2503 in 23S rRNA and position 2 of adenine 37 in tRNAs. m2A2503 modification seems to play a crucial role in the proofreading step occurring at the peptidyl transferase center and thus would serve to optimize ribosomal fidelity. This chain is Dual-specificity RNA methyltransferase RlmN, found in Methylorubrum populi (strain ATCC BAA-705 / NCIMB 13946 / BJ001) (Methylobacterium populi).